We begin with the raw amino-acid sequence, 282 residues long: Acetyl-coenzyme A carboxylase carboxyl transferase subunit beta 1 (282 aa).

The CoA carboxyltransferase N-terminal domain maps to 23 to 282; the sequence is LMTKCPECRH…MHTKGGVQHV (260 aa). Cys-27, Cys-30, Cys-46, and Cys-49 together coordinate Zn(2+). The segment at 27–49 adopts a C4-type zinc-finger fold; it reads CPECRHILLTKELEKNHKVCTKC.

Belongs to the AccD/PCCB family. Acetyl-CoA carboxylase is a heterohexamer composed of biotin carboxyl carrier protein (AccB), biotin carboxylase (AccC) and two subunits each of ACCase subunit alpha (AccA) and ACCase subunit beta (AccD). Zn(2+) serves as cofactor.

Its subcellular location is the cytoplasm. The catalysed reaction is N(6)-carboxybiotinyl-L-lysyl-[protein] + acetyl-CoA = N(6)-biotinyl-L-lysyl-[protein] + malonyl-CoA. Its pathway is lipid metabolism; malonyl-CoA biosynthesis; malonyl-CoA from acetyl-CoA: step 1/1. In terms of biological role, component of the acetyl coenzyme A carboxylase (ACC) complex. Biotin carboxylase (BC) catalyzes the carboxylation of biotin on its carrier protein (BCCP) and then the CO(2) group is transferred by the transcarboxylase to acetyl-CoA to form malonyl-CoA. This chain is Acetyl-coenzyme A carboxylase carboxyl transferase subunit beta 1, found in Lysinibacillus sphaericus (strain C3-41).